The sequence spans 400 residues: NADH-quinone oxidoreductase subunit D (400 aa).

It belongs to the complex I 49 kDa subunit family. NDH-1 is composed of 14 different subunits. Subunits NuoB, C, D, E, F, and G constitute the peripheral sector of the complex.

The protein localises to the cell inner membrane. The enzyme catalyses a quinone + NADH + 5 H(+)(in) = a quinol + NAD(+) + 4 H(+)(out). NDH-1 shuttles electrons from NADH, via FMN and iron-sulfur (Fe-S) centers, to quinones in the respiratory chain. The immediate electron acceptor for the enzyme in this species is believed to be a menaquinone. Couples the redox reaction to proton translocation (for every two electrons transferred, four hydrogen ions are translocated across the cytoplasmic membrane), and thus conserves the redox energy in a proton gradient. The protein is NADH-quinone oxidoreductase subunit D of Pelodictyon phaeoclathratiforme (strain DSM 5477 / BU-1).